The following is a 208-amino-acid chain: uncharacterized protein (208 aa).

Positions 4 to 71 (DYYAILNITP…SRRAQYDRES (68 aa)) constitute a J domain. Residues 67–100 (YDRESASSSAKPRQSFFSRTNPQPQSQSQQGGPS) form a disordered region. Residues 72-87 (ASSSAKPRQSFFSRTN) show a composition bias toward polar residues. The segment covering 88–100 (PQPQSQSQQGGPS) has biased composition (low complexity). The helical transmembrane segment at 127–147 (GIANAFWTIVGTLAGAALGFI) threads the bilayer.

This sequence belongs to the DnaJ family.

The protein localises to the endoplasmic reticulum membrane. This is an uncharacterized protein from Schizosaccharomyces pombe (strain 972 / ATCC 24843) (Fission yeast).